The sequence spans 376 residues: Arginine/serine-rich coiled-coil protein 2 (376 aa).

Residues 1-171 form a disordered region; sequence MIRTNFLLKQ…PSPPPFRGRN (171 aa). Basic and acidic residues predominate over residues 13 to 52; the sequence is RHESKDKSSKRHKSEEHNDKEHSSDKGRERLNSSENGEDR. S45 carries the post-translational modification Phosphoserine. Over residues 53 to 155 the composition is skewed to basic residues; the sequence is HKRKERKSSR…KRIEKPRRFS (103 aa). Residues 171 to 214 adopt a coiled-coil conformation; it reads NTAMDAQEALARRLERAKKLQEQREKEMVEKQKQQEMAAAAAAT. K317 participates in a covalent cross-link: Glycyl lysine isopeptide (Lys-Gly) (interchain with G-Cter in SUMO1); alternate. K317 is covalently cross-linked (Glycyl lysine isopeptide (Lys-Gly) (interchain with G-Cter in SUMO2); alternate). S318 bears the Phosphoserine mark.

Belongs to the RSRC2 family.

The sequence is that of Arginine/serine-rich coiled-coil protein 2 (Rsrc2) from Rattus norvegicus (Rat).